Here is a 547-residue protein sequence, read N- to C-terminus: Chaperonin GroEL 1 (547 aa).

ATP contacts are provided by residues 30–33 (TLGP), Lys51, 87–91 (DGTTT), Gly415, and Asp496.

The protein belongs to the chaperonin (HSP60) family. In terms of assembly, forms a cylinder of 14 subunits composed of two heptameric rings stacked back-to-back. Interacts with the co-chaperonin GroES.

The protein localises to the cytoplasm. The catalysed reaction is ATP + H2O + a folded polypeptide = ADP + phosphate + an unfolded polypeptide.. Functionally, together with its co-chaperonin GroES, plays an essential role in assisting protein folding. The GroEL-GroES system forms a nano-cage that allows encapsulation of the non-native substrate proteins and provides a physical environment optimized to promote and accelerate protein folding. The protein is Chaperonin GroEL 1 of Gluconacetobacter diazotrophicus (strain ATCC 49037 / DSM 5601 / CCUG 37298 / CIP 103539 / LMG 7603 / PAl5).